We begin with the raw amino-acid sequence, 467 residues long: GTPase Obg (467 aa).

The 158-residue stretch at methionine 1–leucine 158 folds into the Obg domain. The region spanning alanine 159 to glutamine 333 is the OBG-type G domain. GTP contacts are provided by residues glycine 165–serine 172, phenylalanine 190–glutamate 194, aspartate 214–glycine 217, asparagine 285–aspartate 288, and serine 314–alanine 316. Mg(2+) contacts are provided by serine 172 and threonine 192. The OCT domain maps to threonine 352–proline 430.

Belongs to the TRAFAC class OBG-HflX-like GTPase superfamily. OBG GTPase family. In terms of assembly, monomer. Requires Mg(2+) as cofactor.

Its subcellular location is the cytoplasm. Functionally, an essential GTPase which binds GTP, GDP and possibly (p)ppGpp with moderate affinity, with high nucleotide exchange rates and a fairly low GTP hydrolysis rate. Plays a role in control of the cell cycle, stress response, ribosome biogenesis and in those bacteria that undergo differentiation, in morphogenesis control. The chain is GTPase Obg from Thermomicrobium roseum (strain ATCC 27502 / DSM 5159 / P-2).